We begin with the raw amino-acid sequence, 449 residues long: Maturation protein A (449 aa).

This sequence belongs to the Leviviricetes maturation protein family. Interacts with the host pilus.

The protein localises to the virion. The maturation protein is required for the typical attachment of the phage to the side of the bacterial F-pili. Binds to sequences located toward each end of the genome, hence circularizing it. The RNA genome-maturation protein A complex is released from the capsid upon host receptor binding. Maturation protein A enters the cell along with the viral RNA. This chain is Maturation protein A, found in Pseudomonas aeruginosa (Bacteriophage PP7).